The primary structure comprises 59 residues: MATGKCYCPEDPRVGPLLVLCLLLLLILFSRSWNVAPVVVPSYHTVYHHEKYQNIEIQK.

Residues 13 to 35 (RVGPLLVLCLLLLLILFSRSWNV) traverse the membrane as a helical segment.

The protein resides in the membrane. Its function is as follows. Cell-to-cell movement. The protein is Putative movement protein p6.6 of Panicum mosaic virus (strain United States/Kansas 109S) (PMV).